Here is a 65-residue protein sequence, read N- to C-terminus: Alpha-toxin Lqq4 (65 aa).

The LCN-type CS-alpha/beta domain occupies 3-65 (RDAYIADDKN…VPIRIPGKCR (63 aa)). The segment at 9 to 13 (DDKNC) is specificity module, loop 1. 4 disulfide bridges follow: cysteine 13/cysteine 64, cysteine 17/cysteine 37, cysteine 23/cysteine 47, and cysteine 27/cysteine 49. 2 specificity module, loop regions span residues 40–44 (LGKYG) and 57–65 (PIRIPGKCR). Residue arginine 65 is modified to Arginine amide.

The protein belongs to the long (4 C-C) scorpion toxin superfamily. Sodium channel inhibitor family. Alpha subfamily. In terms of processing, the recombinant toxin which is used for activity tests is not amidated. However, C-terminal amidation does not appear to play an important role in activity, since the non-amidated recombinant toxin and the native toxin (which is amidated) show similar activities on all sodium channels tested. In terms of tissue distribution, expressed by the venom gland.

The protein localises to the secreted. In terms of biological role, alpha toxins bind voltage-independently at site-3 of sodium channels (Nav) and inhibit the inactivation of the activated channels, thereby blocking neuronal transmission. Both native and recombinant (non-amidated) toxins inhibit inactivation of Nav1.2/SCN2A (EC(50)=31.2-36.6 nM), Nav1.6/SCN8A (EC(50)=6.9-8.9 nM), and Nav1.7/SCN9A (EC(50)=182.0-260.1 nM). The chain is Alpha-toxin Lqq4 from Leiurus quinquestriatus quinquestriatus (Egyptian scorpion).